Consider the following 300-residue polypeptide: Ribosomal protein L11 methyltransferase (300 aa).

S-adenosyl-L-methionine is bound by residues threonine 141, glycine 164, aspartate 186, and asparagine 233.

This sequence belongs to the methyltransferase superfamily. PrmA family.

The protein localises to the cytoplasm. It carries out the reaction L-lysyl-[protein] + 3 S-adenosyl-L-methionine = N(6),N(6),N(6)-trimethyl-L-lysyl-[protein] + 3 S-adenosyl-L-homocysteine + 3 H(+). Its function is as follows. Methylates ribosomal protein L11. This Synechocystis sp. (strain ATCC 27184 / PCC 6803 / Kazusa) protein is Ribosomal protein L11 methyltransferase.